A 160-amino-acid chain; its full sequence is Protein-export protein SecB (160 aa).

It belongs to the SecB family. Homotetramer, a dimer of dimers. One homotetramer interacts with 1 SecA dimer.

The protein resides in the cytoplasm. Functionally, one of the proteins required for the normal export of preproteins out of the cell cytoplasm. It is a molecular chaperone that binds to a subset of precursor proteins, maintaining them in a translocation-competent state. It also specifically binds to its receptor SecA. This is Protein-export protein SecB from Aliivibrio salmonicida (strain LFI1238) (Vibrio salmonicida (strain LFI1238)).